A 215-amino-acid chain; its full sequence is Sodium channel regulatory subunit beta-2 (215 aa).

Positions 1 to 29 are cleaved as a signal peptide; that stretch reads MHRDAWLPRPAFSLTGLSLFFSLVPPGRS. At 30–157 the chain is on the extracellular side; it reads MEVTVPATLN…XEEPPERDST (128 aa). The Ig-like C2-type domain occupies 32 to 154; sequence VTVPATLNVL…QVLXEEPPER (123 aa). N-linked (GlcNAc...) asparagine glycosylation is found at Asn-42, Asn-66, and Asn-74. Cystine bridges form between Cys-50/Cys-127 and Cys-72/Cys-75. A helical membrane pass occupies residues 158-179; the sequence is VAVIVGASVGGFLAVVILVLMV. The Cytoplasmic segment spans residues 180-215; sequence VKCVRRKKEQKLSTDDLKTEEEGKTDGEGNPDDGAK. The interval 187–215 is disordered; it reads KEQKLSTDDLKTEEEGKTDGEGNPDDGAK. Residues 189-215 are compositionally biased toward basic and acidic residues; the sequence is QKLSTDDLKTEEEGKTDGEGNPDDGAK. Ser-192 carries the post-translational modification Phosphoserine. Thr-204 carries the phosphothreonine modification.

This sequence belongs to the sodium channel auxiliary subunit SCN2B (TC 8.A.17) family. In terms of assembly, a voltage-gated sodium (Nav) channel consists of an ion-conducting pore-forming alpha subunit functional on its own that is regulated by one or more beta subunits. The beta subunit SCN2B is disulfide-linked to the pore-forming alpha subunit. Interacts with SCN1A; regulatory subunit of SCN1A/Nav1.1. Interacts with SCN2A; regulatory subunit of SCN2A/Nav1.2. Interacts with SCN3A; regulatory subunit of SCN3A/Nav1.3. Interacts with SCN5A; regulatory subunit of SCN5A/Nav1.5. Interacts with SCN8A; regulatory subunit of SCN8A/Nav1.6. Interacts with SCN9A; regulatory subunit of SCN9A/Nav1.7. Interacts with SCN10A; regulatory subunit of SCN10A/Nav1.8. Interacts with TNR; may play a crucial role in clustering and regulation of activity of SCN2B-containing Nav channels at nodes of Ranvier.

Its subcellular location is the cell membrane. The protein resides in the cell projection. The protein localises to the axon. In terms of biological role, regulatory subunit of multiple voltage-gated sodium (Nav) channels, that directly mediate the depolarization of excitable membranes. Navs, also called VGSCs (voltage-gated sodium channels) or VDSCs (voltage-dependent sodium channels), operate by switching between closed and open conformations depending on the voltage difference across the membrane. In the open conformation they allow Na(+) ions to selectively pass through the pore, along their electrochemical gradient. The influx of Na+ ions provokes membrane depolarization, initiating the propagation of electrical signals throughout cells and tissues. The accessory beta subunits participate in localization and functional modulation of the Nav channels. Modulates the activity of SCN1A/Nav1.1, SCN2A/Nav1.2, SCN2A/Nav1.3, SCN5A/Nav1.5, SCN8A/Nav1.6, SCN9A/Nav1.7 and SCN10A/Nav1.8. This is Sodium channel regulatory subunit beta-2 from Canis lupus familiaris (Dog).